Consider the following 520-residue polypeptide: TnpB-like protein L770 (520 aa).

Residues 23–44 (KTKKKVFVKKKPPDKKPLKKPV) form a disordered region. Zn(2+) is bound by residues Cys474, Cys477, Cys491, and Cys494.

The protein in the central section; belongs to the transposase 2 family. It in the C-terminal section; belongs to the transposase 35 family.

The protein is TnpB-like protein L770 of Acanthamoeba polyphaga mimivirus (APMV).